We begin with the raw amino-acid sequence, 207 residues long: Ankyrin repeat-containing protein P1E11.10 (207 aa).

2 ANK repeats span residues 36 to 65 (NGYTPIHAAVSYGHSDLLKILVERGGDINI) and 69 to 98 (DGETPLFVCEKLEIAHDLINQYNADTTVKN).

The protein localises to the cytoplasm. It localises to the nucleus. This is Ankyrin repeat-containing protein P1E11.10 from Schizosaccharomyces pombe (strain 972 / ATCC 24843) (Fission yeast).